A 446-amino-acid chain; its full sequence is Immunoglobulin heavy constant gamma 3 (446 aa).

Residues 1–98 form a CH1 region; that stretch reads ASTKGPSVFP…PSNTKVDKRV (98 aa). Topologically, residues 1-397 are extracellular; it reads ASTKGPSVFP…DGELDGLWTT (397 aa). Positions 6-99 constitute an Ig-like 1 domain; that stretch reads PSVFPLAPCS…SNTKVDKRVE (94 aa). C27 and C83 are disulfide-bonded. Positions 99 to 160 are hinge; it reads ELKTPLGDTT…DTPPPCPRCP (62 aa). 3 consecutive repeats follow at residues 116–130, 131–145, and 146–160; these read EPKS…PRCP. Residues T122, T137, and T152 are each glycosylated (O-linked (GalNAc...) threonine). Positions 161-270 are CH2; sequence APELLGGPSV…PIEKTISKTK (110 aa). Ig-like domains lie at 168 to 267 and 276 to 372; these read PSVF…KTIS and PQVY…KSLS. 2 disulfide bridges follow: C191-C251 and C297-C355. N-linked (GlcNAc...) asparagine glycans are attached at residues N227 and N322. The tract at residues 271–376 is CH3; sequence GQPREPQVYT…TQKSLSLSPE (106 aa). A helical membrane pass occupies residues 398-418; the sequence is ITIFITLFLLSVCYSATVTFF. Over 419-446 the chain is Cytoplasmic; it reads KVKWIFSSVVDLKQTIIPDYRNMIGQGA.

As to quaternary structure, immunoglobulins are composed of two identical heavy chains and two identical light chains; disulfide-linked. N-linked glycans at Asn-322 are noncore fucosylated and the vast majority are diantennary species with a bisecting GlcNAc. Among them the most dominant glycans are HexNAc5Hex4, HexNAc5Hex5, and HexNAc5Hex5Sia1. Post-translationally, N-linked glycans at Asn-227 are diantennary core fucosylated structures without bisecting GlcNAc (HexNAc4Hex4Fuc1, HexNAc4Hex5Fuc1, and HexNAc4Hex5Fuc1Sia1). Glycosylation on Asn-227 is required for interaction with Fc receptors and ability to activate the complement pathway. In terms of processing, (Microbial infection) Deglycosylation on Asn-227 by S.pyogenes EndoS or Endos2 endoglucosidases prevents interaction between immunoglobulin-gamma (IgG) and Fc receptors, impairing ability to activate the complement pathway. O-linked glycans are non-, mono- and disialylated core 1-type O-glycans.

The protein localises to the secreted. It localises to the cell membrane. Functionally, constant region of immunoglobulin heavy chains. Immunoglobulins, also known as antibodies, are membrane-bound or secreted glycoproteins produced by B lymphocytes. In the recognition phase of humoral immunity, the membrane-bound immunoglobulins serve as receptors which, upon binding of a specific antigen, trigger the clonal expansion and differentiation of B lymphocytes into immunoglobulins-secreting plasma cells. Secreted immunoglobulins mediate the effector phase of humoral immunity, which results in the elimination of bound antigens. The antigen binding site is formed by the variable domain of one heavy chain, together with that of its associated light chain. Thus, each immunoglobulin has two antigen binding sites with remarkable affinity for a particular antigen. The variable domains are assembled by a process called V-(D)-J rearrangement and can then be subjected to somatic hypermutations which, after exposure to antigen and selection, allow affinity maturation for a particular antigen. The sequence is that of Immunoglobulin heavy constant gamma 3 from Homo sapiens (Human).